A 96-amino-acid chain; its full sequence is Co-chaperonin GroES (96 aa).

It belongs to the GroES chaperonin family. As to quaternary structure, heptamer of 7 subunits arranged in a ring. Interacts with the chaperonin GroEL.

It is found in the cytoplasm. In terms of biological role, together with the chaperonin GroEL, plays an essential role in assisting protein folding. The GroEL-GroES system forms a nano-cage that allows encapsulation of the non-native substrate proteins and provides a physical environment optimized to promote and accelerate protein folding. GroES binds to the apical surface of the GroEL ring, thereby capping the opening of the GroEL channel. This chain is Co-chaperonin GroES, found in Buchnera aphidicola subsp. Acyrthosiphon pisum (strain 5A).